Here is a 447-residue protein sequence, read N- to C-terminus: C4-dicarboxylate transport protein (447 aa).

Helical transmembrane passes span 22 to 42, 52 to 72, 90 to 110, 159 to 179, 199 to 219, 232 to 252, 325 to 347, and 366 to 386; these read FQVIVAIVLGAILGHYEPLVG, FINLVKMIIAPVIFLTIVTGI, AYFLFFSTLALIVGMIVAHVV, GNILQVLFIAVLFGIALASVG, LVHILMKAAPIGAFGAIAFTI, WLVGSFYLTAFLFVAVILGVV, LFIAQATNTELTLGHQIALLLVA, and AATLAVVPEVPVAGMALILGV.

The protein belongs to the dicarboxylate/amino acid:cation symporter (DAACS) (TC 2.A.23) family.

Its subcellular location is the cell inner membrane. Its function is as follows. Responsible for the transport of dicarboxylates such as succinate, fumarate, and malate from the periplasm across the membrane. This chain is C4-dicarboxylate transport protein, found in Stenotrophomonas maltophilia (strain R551-3).